Here is a 692-residue protein sequence, read N- to C-terminus: Elongation factor G (692 aa).

One can recognise a tr-type G domain in the interval 8-282 (EKTRNIGIMA…AVLDYLPAPT (275 aa)). GTP contacts are provided by residues 17 to 24 (AHIDAGKT), 81 to 85 (DTPGH), and 135 to 138 (NKMD).

This sequence belongs to the TRAFAC class translation factor GTPase superfamily. Classic translation factor GTPase family. EF-G/EF-2 subfamily.

It localises to the cytoplasm. Its function is as follows. Catalyzes the GTP-dependent ribosomal translocation step during translation elongation. During this step, the ribosome changes from the pre-translocational (PRE) to the post-translocational (POST) state as the newly formed A-site-bound peptidyl-tRNA and P-site-bound deacylated tRNA move to the P and E sites, respectively. Catalyzes the coordinated movement of the two tRNA molecules, the mRNA and conformational changes in the ribosome. This chain is Elongation factor G, found in Bacillus licheniformis (strain ATCC 14580 / DSM 13 / JCM 2505 / CCUG 7422 / NBRC 12200 / NCIMB 9375 / NCTC 10341 / NRRL NRS-1264 / Gibson 46).